The sequence spans 517 residues: UDP-N-acetylmuramoylalanine--D-glutamate ligase (517 aa).

143–149 (GTNGKTT) contributes to the ATP binding site.

It belongs to the MurCDEF family.

The protein localises to the cytoplasm. It carries out the reaction UDP-N-acetyl-alpha-D-muramoyl-L-alanine + D-glutamate + ATP = UDP-N-acetyl-alpha-D-muramoyl-L-alanyl-D-glutamate + ADP + phosphate + H(+). The protein operates within cell wall biogenesis; peptidoglycan biosynthesis. In terms of biological role, cell wall formation. Catalyzes the addition of glutamate to the nucleotide precursor UDP-N-acetylmuramoyl-L-alanine (UMA). The polypeptide is UDP-N-acetylmuramoylalanine--D-glutamate ligase (Leifsonia xyli subsp. xyli (strain CTCB07)).